The sequence spans 339 residues: 2-deoxy-scyllo-inosamine dehydrogenase (339 aa).

Residues cysteine 37, histidine 59, cysteine 88, cysteine 91, cysteine 94, cysteine 102, and glutamate 143 each coordinate Zn(2+).

The protein belongs to the zinc-containing alcohol dehydrogenase family. DOIA dehydrogenase subfamily. Zn(2+) is required as a cofactor.

It carries out the reaction 2-deoxy-scyllo-inosamine + NADP(+) = 3-amino-2,3-dideoxy-scyllo-inosose + NADPH + H(+). The enzyme catalyses 2-deoxy-scyllo-inosamine + NAD(+) = 3-amino-2,3-dideoxy-scyllo-inosose + NADH + H(+). The protein operates within metabolic intermediate biosynthesis; 2-deoxystreptamine biosynthesis; 2-deoxystreptamine from D-glucose 6-phosphate: step 3/4. It participates in antibiotic biosynthesis; tobramycin biosynthesis. Functionally, catalyzes the oxidation of 2-deoxy-scyllo-inosamine (DOIA) with NAD(+) or NADP(+), forming 3-amino-2,3-dideoxy-scyllo-inosose (amino-DOI). This is 2-deoxy-scyllo-inosamine dehydrogenase (tobE) from Streptoalloteichus tenebrarius (strain ATCC 17920 / DSM 40477 / JCM 4838 / CBS 697.72 / NBRC 16177 / NCIMB 11028 / NRRL B-12390 / A12253. 1 / ISP 5477) (Streptomyces tenebrarius).